The chain runs to 101 residues: Urease subunit beta (101 aa).

The protein belongs to the urease beta subunit family. In terms of assembly, heterotrimer of UreA (gamma), UreB (beta) and UreC (alpha) subunits. Three heterotrimers associate to form the active enzyme.

Its subcellular location is the cytoplasm. It carries out the reaction urea + 2 H2O + H(+) = hydrogencarbonate + 2 NH4(+). The protein operates within nitrogen metabolism; urea degradation; CO(2) and NH(3) from urea (urease route): step 1/1. This chain is Urease subunit beta, found in Leptothrix cholodnii (strain ATCC 51168 / LMG 8142 / SP-6) (Leptothrix discophora (strain SP-6)).